Here is a 198-residue protein sequence, read N- to C-terminus: Suppressor of cytokine signaling 2 (198 aa).

The interval 1–29 is disordered; it reads MTLRCLEPSGNGGEGTRSQWGTAGSAEEP. Positions 1-75 are interaction with AREL1; that stretch reads MTLRCLEPSG…PEGTFLIRDS (75 aa). The residue at position 30 (S30) is a Phosphoserine. One can recognise an SH2 domain in the interval 48 to 156; it reads WYWGSMTVNE…TVHLYLTKPL (109 aa). Phosphoserine; by PKC is present on S52. An SOCS box domain is found at 151-197; sequence YLTKPLYTSAPSLQHLCRLTINKCTGAIWGLPLPTRLKDYLEEYKFQ. K173 participates in a covalent cross-link: Glycyl lysine isopeptide (Lys-Gly) (interchain with G-Cter in ubiquitin).

In terms of assembly, substrate-recognition component of the ECS(SOCS2) complex, composed of SOCS2, CUL5, ELOB, ELOC and RNF7/RBX2. Interacts with IGF1R. Interacts with DCUN1D1. Ubiquitinated; mediated by AREL1 and leading to its subsequent proteasomal degradation. Ubiquitination is dependent on its phosphorylation at Ser-52, by PKC. Ubiquitination is stimulated by LPS. In terms of processing, phosphorylation at Ser-52 by PKC facilitates its ubiquitination and proteasomal degradation. High expression in heart, placenta, lung, kidney and prostate. Predominantly expressed in pulmonary epithelia cells, specifically type II pneumocytes.

It localises to the cytoplasm. It functions in the pathway protein modification; protein ubiquitination. With respect to regulation, substrate-binding is prevented by the covalent inhibitor MN551 that cross-links with Cys-111. Also inhibited by a MN551 derivative, MN714, which contains a pivaloyloxymethyl that allows cell permeability. Functionally, substrate-recognition component of a cullin-5-RING E3 ubiquitin-protein ligase complex (ECS complex, also named CRL5 complex), which mediates the ubiquitination and subsequent proteasomal degradation of target proteins, such as EPOR and GHR. Specifically recognizes and binds phosphorylated proteins via its SH2 domain, promoting their ubiquitination. The ECS(SOCS2) complex acts as a key regulator of growth hormone receptor (GHR) levels by mediating ubiquitination and degradation of GHR, following GHR phosphorylation by JAK2. The ECS(SOCS2) also catalyzes ubiquitination and degradation of JAK2-phosphorylated EPOR. The protein is Suppressor of cytokine signaling 2 of Homo sapiens (Human).